A 126-amino-acid polypeptide reads, in one-letter code: Holo-[acyl-carrier-protein] synthase (126 aa).

The Mg(2+) site is built by Asp9 and Glu58.

It belongs to the P-Pant transferase superfamily. AcpS family. The cofactor is Mg(2+).

It localises to the cytoplasm. It carries out the reaction apo-[ACP] + CoA = holo-[ACP] + adenosine 3',5'-bisphosphate + H(+). Its function is as follows. Transfers the 4'-phosphopantetheine moiety from coenzyme A to a Ser of acyl-carrier-protein. In Buchnera aphidicola subsp. Cinara cedri (strain Cc), this protein is Holo-[acyl-carrier-protein] synthase.